We begin with the raw amino-acid sequence, 574 residues long: MSTSASSSYLDDETTWDSFNLDPRLLQAIDQLGFSNPTLIQSSAIPLALEEKRDIIAKASTGSGKTAAYCIPIVNNLLTDDSSQGIKSIILVPTRELSNQVFQFVEKLLTFSTNKINVLNLSSSYSDQVLNSLLVNKPEIIISTPAKLIQILEKNEKNIDLSTVKNLTIDEVDLVLSFGYLDDLKKLESYLPVKKNLQTFLMSATVNDDLDDLKQRYCTKPAILKLNEDSANQNNLVQYYAKTTEFDKFLLAYVIFKLNLIKGKTIAFVNNIDRGYRLKLFLEQFGIRCCILNSELPINSRLHIVEEFNKNVYHLLIATDETNELNEEQDDDEDGDEDTKDKGNAETKPKKSKKSKFKQDKEYGVSRGVDFRNVACVLNFDLPTSSKAYIHRIGRTARAGKAGMALSFVLPLSEFGKHKTASLASAKKDEKVLGRIVKQQSKNGFEIKPYQFDMKQVEGFRYRADDAFRAVTQTAVREARVKELKNELINSEKLKRFFEENPQDLASLRHDKELHPARIQSQLKNVPQYLLPESARQDVKNIGFVPFHKNKIHKHRKGKGKGRKKVDPLKSFRK.

Residues 14 to 42 carry the Q motif motif; sequence TTWDSFNLDPRLLQAIDQLGFSNPTLIQS. A Helicase ATP-binding domain is found at 46 to 224; that stretch reads PLALEEKRDI…QRYCTKPAIL (179 aa). 59-66 contacts ATP; sequence ASTGSGKT. Residues 170–173 carry the DEAD box motif; it reads DEVD. The Helicase C-terminal domain maps to 235 to 455; sequence NLVQYYAKTT…EIKPYQFDMK (221 aa). The segment covering 324-338 has biased composition (acidic residues); that stretch reads ELNEEQDDDEDGDED. Disordered regions lie at residues 324 to 359 and 549 to 574; these read ELNEEQDDDEDGDEDTKDKGNAETKPKKSKKSKFKQ and KNKIHKHRKGKGKGRKKVDPLKSFRK. The span at 339-349 shows a compositional bias: basic and acidic residues; the sequence is TKDKGNAETKP. A compositionally biased stretch (basic residues) spans 549–564; the sequence is KNKIHKHRKGKGKGRK. The span at 565–574 shows a compositional bias: basic and acidic residues; the sequence is KVDPLKSFRK.

Belongs to the DEAD box helicase family. DDX56/DBP9 subfamily.

It is found in the nucleus. It localises to the nucleolus. It carries out the reaction ATP + H2O = ADP + phosphate + H(+). In terms of biological role, ATP-binding RNA helicase involved in the biogenesis of 60S ribosomal subunits and is required for the normal formation of 25S and 5.8S rRNAs. This is ATP-dependent RNA helicase DBP9 (DBP9) from Candida albicans (strain SC5314 / ATCC MYA-2876) (Yeast).